Reading from the N-terminus, the 284-residue chain is Formamidopyrimidine-DNA glycosylase (284 aa).

Pro-2 acts as the Schiff-base intermediate with DNA in catalysis. Catalysis depends on Glu-3, which acts as the Proton donor. Lys-58 functions as the Proton donor; for beta-elimination activity in the catalytic mechanism. 3 residues coordinate DNA: His-101, Arg-120, and Arg-163. The FPG-type zinc finger occupies 248 to 284; that stretch reads RVYDRENAPCVTAGCPDVVRRVVQSGRSSFYCPSCQR. Residue Arg-274 is the Proton donor; for delta-elimination activity of the active site.

It belongs to the FPG family. Monomer. Requires Zn(2+) as cofactor.

It carries out the reaction Hydrolysis of DNA containing ring-opened 7-methylguanine residues, releasing 2,6-diamino-4-hydroxy-5-(N-methyl)formamidopyrimidine.. It catalyses the reaction 2'-deoxyribonucleotide-(2'-deoxyribose 5'-phosphate)-2'-deoxyribonucleotide-DNA = a 3'-end 2'-deoxyribonucleotide-(2,3-dehydro-2,3-deoxyribose 5'-phosphate)-DNA + a 5'-end 5'-phospho-2'-deoxyribonucleoside-DNA + H(+). Functionally, involved in base excision repair of DNA damaged by oxidation or by mutagenic agents. Acts as a DNA glycosylase that recognizes and removes damaged bases. Has a preference for oxidized purines, such as 7,8-dihydro-8-oxoguanine (8-oxoG). Has AP (apurinic/apyrimidinic) lyase activity and introduces nicks in the DNA strand. Cleaves the DNA backbone by beta-delta elimination to generate a single-strand break at the site of the removed base with both 3'- and 5'-phosphates. The polypeptide is Formamidopyrimidine-DNA glycosylase (Dinoroseobacter shibae (strain DSM 16493 / NCIMB 14021 / DFL 12)).